Reading from the N-terminus, the 145-residue chain is Transmembrane protein CCDC163 (145 aa).

Residues 38–54 (LIGLCICFFCSSGCIFL) form a helical membrane-spanning segment.

It localises to the membrane. The chain is Transmembrane protein CCDC163 from Homo sapiens (Human).